Here is a 201-residue protein sequence, read N- to C-terminus: 3-isopropylmalate dehydratase small subunit (201 aa).

Belongs to the LeuD family. LeuD type 1 subfamily. Heterodimer of LeuC and LeuD.

The enzyme catalyses (2R,3S)-3-isopropylmalate = (2S)-2-isopropylmalate. Its pathway is amino-acid biosynthesis; L-leucine biosynthesis; L-leucine from 3-methyl-2-oxobutanoate: step 2/4. In terms of biological role, catalyzes the isomerization between 2-isopropylmalate and 3-isopropylmalate, via the formation of 2-isopropylmaleate. This chain is 3-isopropylmalate dehydratase small subunit, found in Allorhizobium ampelinum (strain ATCC BAA-846 / DSM 112012 / S4) (Agrobacterium vitis (strain S4)).